The chain runs to 274 residues: 3',5'-cyclic adenosine monophosphate phosphodiesterase CpdA (274 aa).

7 residues coordinate Fe cation: D21, H23, D63, N93, H163, H202, and H204. AMP-binding positions include H23, D63, and 93-94 (NH). H204 contacts AMP.

Belongs to the cyclic nucleotide phosphodiesterase class-III family. Fe(2+) is required as a cofactor.

The catalysed reaction is 3',5'-cyclic AMP + H2O = AMP + H(+). Functionally, hydrolyzes cAMP to 5'-AMP. Plays an important regulatory role in modulating the intracellular concentration of cAMP, thereby influencing cAMP-dependent processes. This chain is 3',5'-cyclic adenosine monophosphate phosphodiesterase CpdA, found in Vibrio vulnificus (strain CMCP6).